Consider the following 862-residue polypeptide: DNA topoisomerase 3-beta-1 (862 aa).

Residues Thr-3–Ser-153 form the Toprim domain. Positions Asp-171 to Phe-593 constitute a Topo IA-type catalytic domain. Tyr-336 serves as the catalytic O-(5'-phospho-DNA)-tyrosine intermediate. The segment covering Pro-821–Lys-851 has biased composition (basic residues). The interval Pro-821 to Met-854 is disordered.

Belongs to the type IA topoisomerase family. Isoform 1 is found in testis, heart and skeletal muscle. A 4 kb transcript which probably represents isoform 2 is found in thymus, kidney and pancreas.

The catalysed reaction is ATP-independent breakage of single-stranded DNA, followed by passage and rejoining.. Its function is as follows. Releases the supercoiling and torsional tension of DNA introduced during the DNA replication and transcription by transiently cleaving and rejoining one strand of the DNA duplex. Introduces a single-strand break via transesterification at a target site in duplex DNA. The scissile phosphodiester is attacked by the catalytic tyrosine of the enzyme, resulting in the formation of a DNA-(5'-phosphotyrosyl)-enzyme intermediate and the expulsion of a 3'-OH DNA strand. The free DNA strand than undergoes passage around the unbroken strand thus removing DNA supercoils. Finally, in the religation step, the DNA 3'-OH attacks the covalent intermediate to expel the active-site tyrosine and restore the DNA phosphodiester backbone. Possesses negatively supercoiled DNA relaxing activity. In Homo sapiens (Human), this protein is DNA topoisomerase 3-beta-1 (TOP3B).